The chain runs to 245 residues: MTSTAITSSRAVTSSPVVVALDYDNRDKALAFVDRIDPRDCRLKVGKEMFTLLGPQFVRDLHQRGFEVFLDLKFHDIPNTTARAVAAAAELGVWMVNVHASGGARMMTAAREALLPFGKEAPLLIAVTVLTSMEASDLQDLGITLSPADYAAKLAALTQRCGLDGVVCSAQEAVRFKQEMGQAFKLVTPGIRPQGSEAGDQRRIMTPEQAQAAGVDYMVIGRPVTQSADPAATLRAINVSLSKEA.

Residues D22, K44, 71–80 (DLKFHDIPNT), T131, R192, Q201, G221, and R222 each bind substrate. K73 (proton donor) is an active-site residue.

The protein belongs to the OMP decarboxylase family. Type 1 subfamily. In terms of assembly, homodimer.

The enzyme catalyses orotidine 5'-phosphate + H(+) = UMP + CO2. It functions in the pathway pyrimidine metabolism; UMP biosynthesis via de novo pathway; UMP from orotate: step 2/2. Catalyzes the decarboxylation of orotidine 5'-monophosphate (OMP) to uridine 5'-monophosphate (UMP). The sequence is that of Orotidine 5'-phosphate decarboxylase from Klebsiella pneumoniae (strain 342).